The primary structure comprises 455 residues: Probable 1,4-beta-D-glucan cellobiohydrolase A (455 aa).

The signal sequence occupies residues 1 to 17 (MHQRALLFSAFWTAVQA). Asn81 carries an N-linked (GlcNAc...) asparagine glycan. The active-site Nucleophile is the Glu227. The active-site Proton donor is Glu232. An N-linked (GlcNAc...) asparagine glycan is attached at Asn285.

It belongs to the glycosyl hydrolase 7 (cellulase C) family.

Its subcellular location is the secreted. It carries out the reaction Hydrolysis of (1-&gt;4)-beta-D-glucosidic linkages in cellulose and cellotetraose, releasing cellobiose from the non-reducing ends of the chains.. The biological conversion of cellulose to glucose generally requires three types of hydrolytic enzymes: (1) Endoglucanases which cut internal beta-1,4-glucosidic bonds; (2) Exocellobiohydrolases that cut the disaccharide cellobiose from the non-reducing end of the cellulose polymer chain; (3) Beta-1,4-glucosidases which hydrolyze the cellobiose and other short cello-oligosaccharides to glucose. This chain is Probable 1,4-beta-D-glucan cellobiohydrolase A (cbhA), found in Aspergillus flavus (strain ATCC 200026 / FGSC A1120 / IAM 13836 / NRRL 3357 / JCM 12722 / SRRC 167).